Reading from the N-terminus, the 348-residue chain is Holliday junction branch migration complex subunit RuvB (348 aa).

The interval 4 to 184 (ADRLIAASGR…FGIVQRLEFY (181 aa)) is large ATPase domain (RuvB-L). ATP contacts are provided by residues I23, R24, G65, K68, T69, T70, 131 to 133 (EDF), R174, Y184, and R221. Residue T69 participates in Mg(2+) binding. The small ATPAse domain (RuvB-S) stretch occupies residues 185–255 (SDKDLATIVS…VADMALNLLD (71 aa)). Residues 258–348 (ERGFDHSDRR…GGDFSEPGDE (91 aa)) form a head domain (RuvB-H) region. Residues R294, R313, and R318 each coordinate DNA.

This sequence belongs to the RuvB family. Homohexamer. Forms an RuvA(8)-RuvB(12)-Holliday junction (HJ) complex. HJ DNA is sandwiched between 2 RuvA tetramers; dsDNA enters through RuvA and exits via RuvB. An RuvB hexamer assembles on each DNA strand where it exits the tetramer. Each RuvB hexamer is contacted by two RuvA subunits (via domain III) on 2 adjacent RuvB subunits; this complex drives branch migration. In the full resolvosome a probable DNA-RuvA(4)-RuvB(12)-RuvC(2) complex forms which resolves the HJ.

The protein resides in the cytoplasm. It catalyses the reaction ATP + H2O = ADP + phosphate + H(+). The RuvA-RuvB-RuvC complex processes Holliday junction (HJ) DNA during genetic recombination and DNA repair, while the RuvA-RuvB complex plays an important role in the rescue of blocked DNA replication forks via replication fork reversal (RFR). RuvA specifically binds to HJ cruciform DNA, conferring on it an open structure. The RuvB hexamer acts as an ATP-dependent pump, pulling dsDNA into and through the RuvAB complex. RuvB forms 2 homohexamers on either side of HJ DNA bound by 1 or 2 RuvA tetramers; 4 subunits per hexamer contact DNA at a time. Coordinated motions by a converter formed by DNA-disengaged RuvB subunits stimulates ATP hydrolysis and nucleotide exchange. Immobilization of the converter enables RuvB to convert the ATP-contained energy into a lever motion, pulling 2 nucleotides of DNA out of the RuvA tetramer per ATP hydrolyzed, thus driving DNA branch migration. The RuvB motors rotate together with the DNA substrate, which together with the progressing nucleotide cycle form the mechanistic basis for DNA recombination by continuous HJ branch migration. Branch migration allows RuvC to scan DNA until it finds its consensus sequence, where it cleaves and resolves cruciform DNA. In Pseudomonas putida (strain GB-1), this protein is Holliday junction branch migration complex subunit RuvB.